The sequence spans 247 residues: Carboxy-S-adenosyl-L-methionine synthase (247 aa).

S-adenosyl-L-methionine contacts are provided by residues Y39, 64 to 66 (GCS), 89 to 90 (DN), 117 to 118 (DI), N132, and R199.

This sequence belongs to the class I-like SAM-binding methyltransferase superfamily. Cx-SAM synthase family. As to quaternary structure, homodimer.

The catalysed reaction is prephenate + S-adenosyl-L-methionine = carboxy-S-adenosyl-L-methionine + 3-phenylpyruvate + H2O. In terms of biological role, catalyzes the conversion of S-adenosyl-L-methionine (SAM) to carboxy-S-adenosyl-L-methionine (Cx-SAM). This chain is Carboxy-S-adenosyl-L-methionine synthase, found in Escherichia coli O127:H6 (strain E2348/69 / EPEC).